The primary structure comprises 1008 residues: RNA cytidine acetyltransferase (1008 aa).

ATP is bound by residues 282–291 (GRGKSAALGL) and arginine 443. One can recognise an N-acetyltransferase domain in the interval 531-713 (CLLGPVQRMD…VPVYLSQKSN (183 aa)). Acetyl-CoA is bound by residues 601 to 603 (VAT), 608 to 614 (QRMGYGK), and asparagine 700. The residue at position 907 (serine 907) is a Phosphoserine. The tract at residues 950-1008 (ALETNGTGGGSGLLSVKSGVKRLDGPIETREDGDLAAPLSKKKKKNNPKQRRSQGKSLI) is disordered. Positions 970 to 982 (KRLDGPIETREDG) are enriched in basic and acidic residues. The span at 989-1008 (SKKKKKNNPKQRRSQGKSLI) shows a compositional bias: basic residues.

It belongs to the RNA cytidine acetyltransferase family. NAT10 subfamily. Component of the PRC1 complex (PSC, PC, PH and dRING1) in 0-12 hours Drosophila embryos. This complex is distinct from the Esc/E(z) complex, which contains many other PcG proteins like Esc, E(z), Su(z)12, HDAC1/Rpd3, Caf1-55 and probably Pho. The two complexes however cooperate and interact together during the first 3 hours of development to establish PcG silencing. Part of the small subunit (SSU) processome, composed of more than 70 proteins and the RNA chaperone small nucleolar RNA (snoRNA) U3.

Its subcellular location is the nucleus. It is found in the nucleolus. The enzyme catalyses a cytidine in 18S rRNA + acetyl-CoA + ATP + H2O = an N(4)-acetylcytidine in 18S rRNA + ADP + phosphate + CoA + H(+). It catalyses the reaction a cytidine in tRNA + acetyl-CoA + ATP + H2O = an N(4)-acetylcytidine in tRNA + ADP + phosphate + CoA + H(+). In terms of biological role, RNA cytidine acetyltransferase with specificity toward both 18S rRNA and tRNAs. Catalyzes the formation of N(4)-acetylcytidine (ac4C) in 18S rRNA. Required for early nucleolar cleavages of precursor rRNA at sites A0, A1 and A2 during 18S rRNA synthesis. Catalyzes the formation of ac4C in serine and leucine tRNAs. Requires a tRNA-binding adapter protein for full tRNA acetyltransferase activity but not for 18S rRNA acetylation. Polycomb group (PcG) protein. PcG proteins act by forming multiprotein complexes, which are required to maintain the transcriptionally repressive state of homeotic genes throughout development. PcG proteins are not required to initiate repression, but to maintain it during later stages of development. They probably act via the methylation of histones, rendering chromatin heritably changed in its expressibility. Part of the small subunit (SSU) processome, first precursor of the small eukaryotic ribosomal subunit. During the assembly of the SSU processome in the nucleolus, many ribosome biogenesis factors, an RNA chaperone and ribosomal proteins associate with the nascent pre-rRNA and work in concert to generate RNA folding, modifications, rearrangements and cleavage as well as targeted degradation of pre-ribosomal RNA by the RNA exosome. This chain is RNA cytidine acetyltransferase (l(1)G0020), found in Drosophila melanogaster (Fruit fly).